The sequence spans 584 residues: Membrane frizzled-related protein (584 aa).

Residues 1–69 lie on the Cytoplasmic side of the membrane; it reads MKDYDDVILR…QPDCHFSWFC (69 aa). The helical; Signal-anchor for type II membrane protein transmembrane segment at 70–90 threads the bilayer; it reads ILLLSGLLLLLLGLLVAVILA. The Extracellular portion of the chain corresponds to 91–584; that stretch reads QLQATSLPRT…AASLEACSQP (494 aa). Residues 108-140 are disordered; sequence RGLTPMGVIPSTTPNTTTTTTTTTPARTGQQEA. The segment covering 119-132 has biased composition (low complexity); that stretch reads TTPNTTTTTTTTTP. 2 disulfide bridges follow: cysteine 150/cysteine 176 and cysteine 203/cysteine 222. Positions 150 to 259 constitute a CUB 1 domain; sequence CGGLLPGPSG…SGFQAWYQAV (110 aa). Asparagine 233 carries N-linked (GlcNAc...) asparagine glycosylation. Positions 265–301 constitute an LDL-receptor class A 1 domain; sequence SCAHNEFHCDLLLCLKRDSVCDGITECADGSDEANCS. Disulfide bonds link cysteine 266/cysteine 278, cysteine 273/cysteine 291, cysteine 285/cysteine 300, cysteine 307/cysteine 333, and cysteine 360/cysteine 383. The CUB 2 domain occupies 307–420; it reads CGGNLTGLYG…GGFLATYQAI (114 aa). Residue asparagine 421 is glycosylated (N-linked (GlcNAc...) asparagine). The 35-residue stretch at 426–460 folds into the LDL-receptor class A 2 domain; it reads GCPWAEFCQSGGYRDLQWMCDLWKDCANDSNDNCS. Intrachain disulfides connect cysteine 433-cysteine 451, cysteine 445-cysteine 459, cysteine 471-cysteine 533, cysteine 479-cysteine 526, cysteine 517-cysteine 554, cysteine 543-cysteine 581, and cysteine 547-cysteine 569. Asparagine 458 carries an N-linked (GlcNAc...) asparagine glycan. The region spanning 466 to 584 is the FZ domain; it reads QPDLTCEPVQ…AASLEACSQP (119 aa).

As to quaternary structure, interacts with C1QTNF5. Expressed in retinal pigment epithelium and ciliary epithelium of the eye.

It localises to the apical cell membrane. Functionally, may play a role in eye development. In Mus musculus (Mouse), this protein is Membrane frizzled-related protein (Mfrp).